We begin with the raw amino-acid sequence, 320 residues long: 1-aminocyclopropane-1-carboxylate oxidase 2 (320 aa).

Positions 111–143 form a coiled coil; that stretch reads DEYRTAMKDFGKRLENLAEDLLDLLCENLGLEK. One can recognise a Fe2OG dioxygenase domain in the interval 156–256; that stretch reads PTFGTKVSNY…RMSVASFYNP (101 aa). Fe cation-binding residues include histidine 180, aspartate 182, and histidine 237. Residue arginine 247 coordinates 2-oxoglutarate.

It belongs to the iron/ascorbate-dependent oxidoreductase family. Fe(2+) is required as a cofactor. Requires Cu(2+) as cofactor. Expressed in vegetative tissues. Constitutively expressed in leaves and blades. In ethylene exposed etiolated seedlings, localized in cells at the outer side of the exaggerated hook in an ethylene-dependent manner and following an ethylene sensitive pattern. Also detected in the root tip when treated by ethylene.

The catalysed reaction is 1-aminocyclopropane-1-carboxylate + L-ascorbate + O2 = ethene + L-dehydroascorbate + hydrogen cyanide + CO2 + 2 H2O. It functions in the pathway alkene biosynthesis; ethylene biosynthesis via S-adenosyl-L-methionine; ethylene from S-adenosyl-L-methionine: step 2/2. Enzyme involved in the ethylene biosynthesis. Required to mediate the 1-aminocyclopropane-1-carboxylic acid (ACC)-mediated reversion of the ABA-induced inhibition of seed germination via endosperm rupture. May promote stem elongation by maximizing the extensibility cells, possibly by activating ethylene biosynthesis, in response to very-long-chain fatty acids (VLCFAs C20:0 to C30:0). In Arabidopsis thaliana (Mouse-ear cress), this protein is 1-aminocyclopropane-1-carboxylate oxidase 2 (ACO2).